A 247-amino-acid chain; its full sequence is DNA polymerase sliding clamp 1 (247 aa).

This sequence belongs to the PCNA family. In terms of assembly, heterotrimer. The subunits circularize to form a toroid; DNA passes through its center. Replication factor C (RFC) is required to load the toroid on the DNA.

Its function is as follows. Sliding clamp subunit that acts as a moving platform for DNA processing. Responsible for tethering the catalytic subunit of DNA polymerase and other proteins to DNA during high-speed replication. This is DNA polymerase sliding clamp 1 from Aeropyrum pernix (strain ATCC 700893 / DSM 11879 / JCM 9820 / NBRC 100138 / K1).